The chain runs to 453 residues: tRNA modification GTPase MnmE (453 aa).

(6S)-5-formyl-5,6,7,8-tetrahydrofolate contacts are provided by R22, E79, and K119. Residues G215–G376 form the TrmE-type G domain. N225 provides a ligand contact to K(+). GTP-binding positions include N225–S230, T244–T250, D269–G272, and N334–D337. Mg(2+) is bound at residue S229. Positions 244, 246, and 249 each coordinate K(+). T250 provides a ligand contact to Mg(2+). K453 is a (6S)-5-formyl-5,6,7,8-tetrahydrofolate binding site.

This sequence belongs to the TRAFAC class TrmE-Era-EngA-EngB-Septin-like GTPase superfamily. TrmE GTPase family. As to quaternary structure, homodimer. Heterotetramer of two MnmE and two MnmG subunits. Requires K(+) as cofactor.

Its subcellular location is the cytoplasm. Functionally, exhibits a very high intrinsic GTPase hydrolysis rate. Involved in the addition of a carboxymethylaminomethyl (cmnm) group at the wobble position (U34) of certain tRNAs, forming tRNA-cmnm(5)s(2)U34. This chain is tRNA modification GTPase MnmE, found in Vibrio parahaemolyticus serotype O3:K6 (strain RIMD 2210633).